Reading from the N-terminus, the 343-residue chain is Holliday junction branch migration complex subunit RuvB (343 aa).

The interval 1 to 186 (MVMARKSDTL…FQIQERLEYY (186 aa)) is large ATPase domain (RuvB-L). ATP is bound by residues Leu-25, Arg-26, Gly-67, Lys-70, Thr-71, Ser-72, 133 to 135 (EDF), Arg-176, Tyr-186, and Arg-223. Residue Thr-71 participates in Mg(2+) binding. The segment at 187-257 (DAKALESILH…LAQKSLDRLG (71 aa)) is small ATPAse domain (RuvB-S). The interval 260–343 (ASGLDSMDRK…PPPTPQGSLF (84 aa)) is head domain (RuvB-H). Residues Arg-296, Arg-315, and Arg-320 each coordinate DNA.

The protein belongs to the RuvB family. Homohexamer. Forms an RuvA(8)-RuvB(12)-Holliday junction (HJ) complex. HJ DNA is sandwiched between 2 RuvA tetramers; dsDNA enters through RuvA and exits via RuvB. An RuvB hexamer assembles on each DNA strand where it exits the tetramer. Each RuvB hexamer is contacted by two RuvA subunits (via domain III) on 2 adjacent RuvB subunits; this complex drives branch migration. In the full resolvosome a probable DNA-RuvA(4)-RuvB(12)-RuvC(2) complex forms which resolves the HJ.

The protein resides in the cytoplasm. It catalyses the reaction ATP + H2O = ADP + phosphate + H(+). Functionally, the RuvA-RuvB-RuvC complex processes Holliday junction (HJ) DNA during genetic recombination and DNA repair, while the RuvA-RuvB complex plays an important role in the rescue of blocked DNA replication forks via replication fork reversal (RFR). RuvA specifically binds to HJ cruciform DNA, conferring on it an open structure. The RuvB hexamer acts as an ATP-dependent pump, pulling dsDNA into and through the RuvAB complex. RuvB forms 2 homohexamers on either side of HJ DNA bound by 1 or 2 RuvA tetramers; 4 subunits per hexamer contact DNA at a time. Coordinated motions by a converter formed by DNA-disengaged RuvB subunits stimulates ATP hydrolysis and nucleotide exchange. Immobilization of the converter enables RuvB to convert the ATP-contained energy into a lever motion, pulling 2 nucleotides of DNA out of the RuvA tetramer per ATP hydrolyzed, thus driving DNA branch migration. The RuvB motors rotate together with the DNA substrate, which together with the progressing nucleotide cycle form the mechanistic basis for DNA recombination by continuous HJ branch migration. Branch migration allows RuvC to scan DNA until it finds its consensus sequence, where it cleaves and resolves cruciform DNA. The polypeptide is Holliday junction branch migration complex subunit RuvB (Myxococcus xanthus (strain DK1622)).